Reading from the N-terminus, the 717-residue chain is Delta-1-pyrroline-5-carboxylate synthase (717 aa).

A glutamate 5-kinase region spans residues 1–296 (METVDSTRAF…WASIGETDAR (296 aa)). Substrate is bound by residues Ser-60, Asp-157, and Asn-176. ATP contacts are provided by residues 196–197 (SD) and 236–242 (RGGMTAK). Residues 297–717 (EMAVAARACS…YSHKDLTQQG (421 aa)) form a gamma-glutamyl phosphate reductase region.

It in the N-terminal section; belongs to the glutamate 5-kinase family. This sequence in the C-terminal section; belongs to the gamma-glutamyl phosphate reductase family. Expressed at high levels in leaves and is inducible in roots subjected to salt stress.

The catalysed reaction is L-glutamate + ATP = L-glutamyl 5-phosphate + ADP. The enzyme catalyses L-glutamate 5-semialdehyde + phosphate + NADP(+) = L-glutamyl 5-phosphate + NADPH + H(+). It functions in the pathway amino-acid biosynthesis; L-proline biosynthesis; L-glutamate 5-semialdehyde from L-glutamate: step 1/2. Its pathway is amino-acid biosynthesis; L-proline biosynthesis; L-glutamate 5-semialdehyde from L-glutamate: step 2/2. With respect to regulation, feedback regulated by proline. In terms of biological role, P5CS plays a key role in proline biosynthesis, leading to osmoregulation in plants. In Solanum lycopersicum (Tomato), this protein is Delta-1-pyrroline-5-carboxylate synthase (PRO2).